Consider the following 328-residue polypeptide: Lateral signaling target 1 protein (328 aa).

Disordered regions lie at residues 56 to 78, 108 to 135, and 177 to 200; these read SSQD…GLRS, PTHY…SASS, and PVQP…RLNG. Over residues 178 to 200 the composition is skewed to polar residues; the sequence is VQPSTSTSRNNVSQISGSSRLNG.

In terms of assembly, interacts with fbf-2; the interaction probably mediates the release of the C-terminal tail of fbf-2 from the RNA-binding domain, thereby altering its RNA-binding affinity.

Plays a role in germline stem cell maintenance, perhaps acting in concert with mRNA-binding factor fbf-2. May regulate fbf-2 by modulating RNA-binding and perhaps by competition with the intramolecular interaction between the fbf-2 RNA-binding domain and C-terminal tail. The protein is Lateral signaling target 1 protein of Caenorhabditis elegans.